The following is a 316-amino-acid chain: Cytochrome c biogenesis protein CcsA (316 aa).

Transmembrane regions (helical) follow at residues 19-39, 47-67, 77-97, 106-126, 151-171, 224-244, 258-275, and 285-305; these read VLTL…FSFW, SSIV…QLVF, ISNL…IQLL, LIQA…SFVL, VIMC…VVLL, TITF…VWAN, TWAF…HTRL, and AIIA…VNFL.

The protein belongs to the CcmF/CycK/Ccl1/NrfE/CcsA family. In terms of assembly, may interact with ccs1.

Its subcellular location is the cellular thylakoid membrane. Its function is as follows. Required during biogenesis of c-type cytochromes (cytochrome c6 and cytochrome f) at the step of heme attachment. In Prochlorococcus marinus (strain SARG / CCMP1375 / SS120), this protein is Cytochrome c biogenesis protein CcsA.